Consider the following 130-residue polypeptide: Small ribosomal subunit protein uS9 (130 aa).

Belongs to the universal ribosomal protein uS9 family.

This is Small ribosomal subunit protein uS9 from Yersinia enterocolitica serotype O:8 / biotype 1B (strain NCTC 13174 / 8081).